We begin with the raw amino-acid sequence, 227 residues long: NAD(P)H-quinone oxidoreductase subunit K, chloroplastic (227 aa).

Residues C43, C44, C108, and C139 each coordinate [4Fe-4S] cluster.

It belongs to the complex I 20 kDa subunit family. In terms of assembly, NDH is composed of at least 16 different subunits, 5 of which are encoded in the nucleus. The cofactor is [4Fe-4S] cluster.

Its subcellular location is the plastid. The protein resides in the chloroplast thylakoid membrane. It carries out the reaction a plastoquinone + NADH + (n+1) H(+)(in) = a plastoquinol + NAD(+) + n H(+)(out). It catalyses the reaction a plastoquinone + NADPH + (n+1) H(+)(in) = a plastoquinol + NADP(+) + n H(+)(out). In terms of biological role, NDH shuttles electrons from NAD(P)H:plastoquinone, via FMN and iron-sulfur (Fe-S) centers, to quinones in the photosynthetic chain and possibly in a chloroplast respiratory chain. It has NADH- and deamino-NADH-specific dehydrogenase activity, using ferricyanide or quinones as acceptors. The immediate electron acceptor for the enzyme in this species is believed to be plastoquinone. Couples the redox reaction to proton translocation, and thus conserves the redox energy in a proton gradient. In Pisum sativum (Garden pea), this protein is NAD(P)H-quinone oxidoreductase subunit K, chloroplastic.